We begin with the raw amino-acid sequence, 179 residues long: Segregation and condensation protein B (179 aa).

This sequence belongs to the ScpB family. Homodimer. Homodimerization may be required to stabilize the binding of ScpA to the Smc head domains. Component of a cohesin-like complex composed of ScpA, ScpB and the Smc homodimer, in which ScpA and ScpB bind to the head domain of Smc. The presence of the three proteins is required for the association of the complex with DNA.

It localises to the cytoplasm. Functionally, participates in chromosomal partition during cell division. May act via the formation of a condensin-like complex containing Smc and ScpA that pull DNA away from mid-cell into both cell halves. This Staphylococcus haemolyticus (strain JCSC1435) protein is Segregation and condensation protein B.